The following is a 353-amino-acid chain: Casein kinase II subunit alpha (353 aa).

The region spanning 39 to 324 (YQLVRKLGRG…AREAMDHPYF (286 aa)) is the Protein kinase domain. Residues 45 to 53 (LGRGKYSEV) and lysine 68 each bind ATP. Residue aspartate 156 is the Proton acceptor of the active site. The interval 334-353 (MVSSNSPTPNALQGPISTTE) is disordered.

It belongs to the protein kinase superfamily. Ser/Thr protein kinase family. CK2 subfamily. Tetramer of two alpha and two beta chains.

It carries out the reaction L-seryl-[protein] + ATP = O-phospho-L-seryl-[protein] + ADP + H(+). The catalysed reaction is L-threonyl-[protein] + ATP = O-phospho-L-threonyl-[protein] + ADP + H(+). In terms of biological role, casein kinases are operationally defined by their preferential utilization of acidic proteins such as caseins as substrates. The alpha chain contains the catalytic site. May participate in Wnt signaling. This chain is Casein kinase II subunit alpha, found in Spodoptera frugiperda (Fall armyworm).